The primary structure comprises 336 residues: MAKIYYQQDCNLSLLEGKTVAVIGYGSQGHAHALNMKESGVHVIIGLYEGSKSWAKASAAGFEVYTAAEAAKKADVIMILINDEKQAKMYKESIEPNLEAGNALMFAHGFAIHFGQIIPPKDVDVLMIAPKGPGHTVRSQYQEGQGVPCLIAVHQDATGKAHDLGLAYALAIGGARAGVLETTFREETETDLFGEQAVLCGGVTALMKCGFEVLVEAGYEPESAYFECIHEMKLIVDLINESGFAGMRYSISNTAEYGDYITGPKIITEDTKNAMRQVLKDIQEGVFARNWLLENQVGCPNFNAKRRMESEHQLEKVGAELRGLMSWTQKKKLIDN.

The region spanning 2 to 182 (AKIYYQQDCN…GGARAGVLET (181 aa)) is the KARI N-terminal Rossmann domain. Residues 25 to 28 (YGSQ), S51, S53, and 83 to 86 (DEKQ) contribute to the NADP(+) site. H108 is a catalytic residue. NADP(+) is bound at residue G134. The region spanning 183–328 (TFREETETDL…AELRGLMSWT (146 aa)) is the KARI C-terminal knotted domain. Mg(2+)-binding residues include D191, E195, E227, and E231. S252 contacts substrate.

It belongs to the ketol-acid reductoisomerase family. The cofactor is Mg(2+).

It catalyses the reaction (2R)-2,3-dihydroxy-3-methylbutanoate + NADP(+) = (2S)-2-acetolactate + NADPH + H(+). It carries out the reaction (2R,3R)-2,3-dihydroxy-3-methylpentanoate + NADP(+) = (S)-2-ethyl-2-hydroxy-3-oxobutanoate + NADPH + H(+). It functions in the pathway amino-acid biosynthesis; L-isoleucine biosynthesis; L-isoleucine from 2-oxobutanoate: step 2/4. It participates in amino-acid biosynthesis; L-valine biosynthesis; L-valine from pyruvate: step 2/4. Its function is as follows. Involved in the biosynthesis of branched-chain amino acids (BCAA). Catalyzes an alkyl-migration followed by a ketol-acid reduction of (S)-2-acetolactate (S2AL) to yield (R)-2,3-dihydroxy-isovalerate. In the isomerase reaction, S2AL is rearranged via a Mg-dependent methyl migration to produce 3-hydroxy-3-methyl-2-ketobutyrate (HMKB). In the reductase reaction, this 2-ketoacid undergoes a metal-dependent reduction by NADPH to yield (R)-2,3-dihydroxy-isovalerate. The chain is Ketol-acid reductoisomerase (NADP(+)) from Lachnoclostridium phytofermentans (strain ATCC 700394 / DSM 18823 / ISDg) (Clostridium phytofermentans).